The chain runs to 342 residues: Heparan sulfate glucosamine 3-O-sulfotransferase 6 (342 aa).

Topologically, residues 1–31 (MAGSGGLGGGAGDLQGAGTGQGTALRALRAP) are cytoplasmic. A helical; Signal-anchor for type II membrane protein transmembrane segment spans residues 32 to 49 (LALVVLLLSAYCLFALPG). Topologically, residues 50-342 (RCPPAARAPA…QMTGQDFGWD (293 aa)) are lumenal. The interval 56 to 75 (RAPAPVPAPAEPPHTSLRLR) is disordered. 100-104 (KGGTR) contributes to the 3'-phosphoadenylyl sulfate binding site. Substrate is bound by residues 122–128 (EPHFFDR) and 153–156 (KTPS). 3'-phosphoadenylyl sulfate is bound by residues Arg-181 and Ser-189. Position 220–221 (220–221 (WS)) interacts with substrate. A glycan (N-linked (GlcNAc...) asparagine) is linked at Asn-281. Cys-288 and Cys-300 form a disulfide bridge. Residue 305–309 (KGRPH) coordinates 3'-phosphoadenylyl sulfate.

The protein belongs to the sulfotransferase 1 family. In terms of tissue distribution, expressed in liver and kidney, followed by heart, brain, lung and testis.

The protein resides in the golgi apparatus membrane. It carries out the reaction alpha-D-glucosaminyl-[heparan sulfate](n) + 3'-phosphoadenylyl sulfate = 3-sulfo-alpha-D-glucosaminyl-[heparan sulfate](n) + adenosine 3',5'-bisphosphate + H(+). Its function is as follows. Sulfotransferase that utilizes 3'-phospho-5'-adenylyl sulfate (PAPS) to catalyze the transfer of a sulfo group to heparan sulfate. Unlike 3-OST-1, does not convert non-anticoagulant heparan sulfate to anticoagulant heparan sulfate. In Mus musculus (Mouse), this protein is Heparan sulfate glucosamine 3-O-sulfotransferase 6 (Hs3st6).